The primary structure comprises 182 residues: Small ribosomal subunit protein uS4c (182 aa).

Residues 82-143 form the S4 RNA-binding domain; sequence MRLDNILFRL…KQRSKALIQN (62 aa).

Belongs to the universal ribosomal protein uS4 family. In terms of assembly, part of the 30S ribosomal subunit. Contacts protein S5. The interaction surface between S4 and S5 is involved in control of translational fidelity.

It is found in the plastid. The protein localises to the chloroplast. One of the primary rRNA binding proteins, it binds directly to 16S rRNA where it nucleates assembly of the body of the 30S subunit. Functionally, with S5 and S12 plays an important role in translational accuracy. This is Small ribosomal subunit protein uS4c (rps4) from Iris domestica (Leopard lily).